The following is a 65-amino-acid chain: Large ribosomal subunit protein bL35 (65 aa).

Residues 1-65 (MPKMKTNRAA…GRLDRMLPYL (65 aa)) form a disordered region. Residues 10–44 (AAKRFRKTASGKYKAGHANRSHILTKKATKRKRNL) show a composition bias toward basic residues. Residues 50–65 (VRAEDAGRLDRMLPYL) are compositionally biased toward basic and acidic residues.

The protein belongs to the bacterial ribosomal protein bL35 family.

This is Large ribosomal subunit protein bL35 from Xylella fastidiosa (strain M12).